Reading from the N-terminus, the 622-residue chain is Mitochondrial distribution and morphology protein 34 (622 aa).

Residues 1–204 (MSFKVNWNSL…LPTLIHQLSL (204 aa)) enclose the SMP-LTD domain. Disordered regions lie at residues 362-399 (YSNKDAPTKPKRRRIKVHKKNKSKHDETTTTTSKPSEL) and 568-592 (FDGGKNNNTNDNNSKNFRPGFTRNE). A compositionally biased stretch (basic residues) spans 370-384 (KPKRRRIKVHKKNKS). The span at 390–399 (TTTTSKPSEL) shows a compositional bias: polar residues. The span at 571 to 583 (GKNNNTNDNNSKN) shows a compositional bias: low complexity.

It belongs to the MDM34 family. In terms of assembly, component of the ER-mitochondria encounter structure (ERMES) or MDM complex, composed of MMM1, MDM10, MDM12 and MDM34.

It is found in the mitochondrion outer membrane. In terms of biological role, component of the ERMES/MDM complex, which serves as a molecular tether to connect the endoplasmic reticulum (ER) and mitochondria. Components of this complex are involved in the control of mitochondrial shape and protein biogenesis, and function in nonvesicular lipid trafficking between the ER and mitochondria. MDM34 is required for the interaction of the ER-resident membrane protein MMM1 and the outer mitochondrial membrane-resident beta-barrel protein MDM10. The sequence is that of Mitochondrial distribution and morphology protein 34 from Candida dubliniensis (strain CD36 / ATCC MYA-646 / CBS 7987 / NCPF 3949 / NRRL Y-17841) (Yeast).